The following is a 150-amino-acid chain: UPF0756 membrane protein plu2726 (150 aa).

A run of 4 helical transmembrane segments spans residues 8–28, 51–71, 88–108, and 123–143; these read LLVL…TVTL, YGLT…IASG, LLAI…VSLM, and VLGV…AGIL.

It belongs to the UPF0756 family.

Its subcellular location is the cell membrane. In Photorhabdus laumondii subsp. laumondii (strain DSM 15139 / CIP 105565 / TT01) (Photorhabdus luminescens subsp. laumondii), this protein is UPF0756 membrane protein plu2726.